The sequence spans 219 residues: Probable GTP-binding protein EngB (219 aa).

The 184-residue stretch at 24-207 (VQPEIAFAGR…HALIESWLRP (184 aa)) folds into the EngB-type G domain. GTP is bound by residues 32–39 (GRSNAGKS), 59–63 (GRTQH), 81–84 (DLPG), 148–151 (TKCD), and 185–188 (LFSA). Mg(2+)-binding residues include serine 39 and threonine 61.

This sequence belongs to the TRAFAC class TrmE-Era-EngA-EngB-Septin-like GTPase superfamily. EngB GTPase family. The cofactor is Mg(2+).

Functionally, necessary for normal cell division and for the maintenance of normal septation. The protein is Probable GTP-binding protein EngB of Burkholderia thailandensis (strain ATCC 700388 / DSM 13276 / CCUG 48851 / CIP 106301 / E264).